We begin with the raw amino-acid sequence, 173 residues long: Co-chaperone protein HscB homolog (173 aa).

In terms of domain architecture, J spans 5 to 77 (CHFALFELQP…PKRARYLLAM (73 aa)).

Belongs to the HscB family. In terms of assembly, interacts with HscA and stimulates its ATPase activity.

Functionally, co-chaperone involved in the maturation of iron-sulfur cluster-containing proteins. Seems to help targeting proteins to be folded toward HscA. The chain is Co-chaperone protein HscB homolog from Pseudomonas fluorescens (strain SBW25).